We begin with the raw amino-acid sequence, 198 residues long: Bcl-2-like protein 11 (198 aa).

The disordered stretch occupies residues 1–72 (MAKQPSDVSS…PLAPPASPGP (72 aa)). Serine 69 is subject to Phosphoserine; by MAPK. 3 positions are modified to phosphoserine: serine 77, serine 87, and serine 94. The short motif at 148 to 162 (IAQELRRIGDEFNAY) is the BH3 element.

This sequence belongs to the Bcl-2 family. As to quaternary structure, forms heterodimers with a number of antiapoptotic Bcl-2 proteins, including MCL1, BCL2, BCL2L1 isoform Bcl-X(L), BCL2A1/BFL-1, BHRF1, and BCL2L2/BCLW. Does not heterodimerize with proapoptotic proteins such as BAD, BOK or BAK. Identified in a complex containing BCL2L11, DYNLL1 and BCL2L1 isoform Bcl-X(L); BH3 integrity is required for BCL2L1-binding. Interacts with YWHAZ. When phosphorylated, interacts with TRIM2; this interaction is associated with ubiquitination and degradation. Interacts with MCL1; may sequester BCL2L11 to prevent its pro-apoptotic activity. Interacts with GIMAP5. Interacts with BCL2L10/BCL-B. Interacts (when phosphorylated) with USP27X; the interaction leads to BCL2L11 deubiquitination and stabilization. Interacts with humanin; the interaction prevents BIM-induced apoptosis. In terms of assembly, does not interact with humanin. As to quaternary structure, interacts with BAX; the interaction may lead to BAX activation through conformational change. Does not interact with humanin. Interacts with BAX; the interaction may lead to BAX activation through conformational change. Post-translationally, phosphorylation at Ser-69 by MAPK1/MAPK3 leads to interaction with TRIM2 and polyubiquitination, followed by proteasomal degradation. Deubiquitination catalyzed by USP27X stabilizes the protein. In terms of processing, ubiquitination by TRIM2 following phosphorylation by MAPK1/MAPK3 leads to proteasomal degradation. Conversely, deubiquitination catalyzed by USP27X stabilizes the protein. In terms of tissue distribution, isoform BimEL, isoform BimL and isoform BimS are the predominant isoforms and are widely expressed with tissue-specific variation. Isoform Bim-gamma is most abundantly expressed in small intestine and colon, and in lower levels in spleen, prostate, testis, heart, liver and kidney.

It is found in the endomembrane system. Its subcellular location is the mitochondrion. Its function is as follows. Induces apoptosis and anoikis. Isoform BimL is more potent than isoform BimEL. Isoform Bim-alpha1, isoform Bim-alpha2 and isoform Bim-alpha3 induce apoptosis, although less potent than isoform BimEL, isoform BimL and isoform BimS. Isoform Bim-gamma induces apoptosis. Isoform Bim-alpha3 induces apoptosis possibly through a caspase-mediated pathway. Isoform BimAC and isoform BimABC lack the ability to induce apoptosis. The chain is Bcl-2-like protein 11 (BCL2L11) from Homo sapiens (Human).